We begin with the raw amino-acid sequence, 151 residues long: RNA polymerase-binding transcription factor DksA (151 aa).

Residues asparagine 33–glutamate 54 adopt a coiled-coil conformation. Zn(2+) contacts are provided by cysteine 114, cysteine 117, cysteine 135, and cysteine 138. Residues cysteine 114–cysteine 138 form a dksA C4-type zinc finger.

Belongs to the DksA family. As to quaternary structure, interacts directly with the RNA polymerase.

It is found in the cytoplasm. Functionally, transcription factor that acts by binding directly to the RNA polymerase (RNAP). Required for negative regulation of rRNA expression and positive regulation of several amino acid biosynthesis promoters. Also required for regulation of fis expression. The chain is RNA polymerase-binding transcription factor DksA from Escherichia coli O157:H7.